We begin with the raw amino-acid sequence, 262 residues long: Flap endonuclease Xni (262 aa).

Asp-105 contributes to the Mg(2+) binding site. In terms of domain architecture, 5'-3' exonuclease spans 162–259 (ERSQFLDLMA…VIDSQPEKTI (98 aa)). Residues Leu-172, Ala-173, Pro-181, Ile-183, and Ile-186 each contribute to the K(+) site. Positions 185-190 (GIGPKS) are interaction with DNA.

Belongs to the Xni family. Mg(2+) serves as cofactor. The cofactor is K(+).

Has flap endonuclease activity. During DNA replication, flap endonucleases cleave the 5'-overhanging flap structure that is generated by displacement synthesis when DNA polymerase encounters the 5'-end of a downstream Okazaki fragment. The polypeptide is Flap endonuclease Xni (Shewanella baltica (strain OS185)).